The sequence spans 199 residues: dCTP deaminase (199 aa).

DCTP contacts are provided by residues 110–115, D128, 136–138, Y171, and Q182; these read RSSLAR and VLE. E138 acts as the Proton donor/acceptor in catalysis.

This sequence belongs to the dCTP deaminase family. Homotrimer.

The enzyme catalyses dCTP + H2O + H(+) = dUTP + NH4(+). Its pathway is pyrimidine metabolism; dUMP biosynthesis; dUMP from dCTP (dUTP route): step 1/2. Its function is as follows. Catalyzes the deamination of dCTP to dUTP. The polypeptide is dCTP deaminase (Pseudoalteromonas atlantica (strain T6c / ATCC BAA-1087)).